Here is a 99-residue protein sequence, read N- to C-terminus: Bombyxin A-1 homolog (99 aa).

The first 19 residues, 1–19 (MKTQVLFLVFALAAVMVSG), serve as a signal peptide directing secretion. 3 cysteine pairs are disulfide-bonded: Cys27-Cys86, Cys39-Cys99, and Cys85-Cys90. A propeptide spans 48 to 76 (TPYISPENEGYGWRWLEPQRARQLDGARG) (c peptide like).

This sequence belongs to the insulin family. Heterodimer of a B chain and an A chain linked by two disulfide bonds.

The protein localises to the secreted. Its function is as follows. Brain peptide responsible for activation of prothoracic glands to produce ecdysone in insects. This chain is Bombyxin A-1 homolog (SBXA1), found in Samia cynthia (Ailanthus silkmoth).